A 376-amino-acid chain; its full sequence is MLIRGEDVTIPTSMVGNYPNPRWWDAQFARTWTGDQEPPDALIQESLEDAVAAIARDQERAGLDIISDGRVHGDNYAEQALYYYYRRLGYDLKGGYLGFPIYSRLHAGTLTGEVRRHGAIMVEQAKALKKATGKPTKVQYTGVQALTQATNDLHYKSSRDRAMAIAKAINEDIREVDALGVDFIQIDEFTWPYFFEDWAIEAFNAAVDGVKNAKIIAHVCWGNWGGTPAYYPDETAASGEIFDLTKRKAEATKATATGSIVPKAYEARLDVLNLESCGRRSDDLSGLHVMKNHPLPDNVSFWAGVIDVKSTITETADEVANRIRRLLEIVPADRLGVTTDCGLILLQRYIAQDKLHALVEGTKIVRAELAKAKQAA.

Zn(2+)-binding residues include H218, C220, and C341.

The protein belongs to the vitamin-B12 independent methionine synthase family. As to quaternary structure, homohexamer. Component I of the aliphatic epoxide carboxylation complex together with components II, III and IV. The cofactor is Zn(2+).

It catalyses the reaction (R)-2-hydroxypropyl-coenzyme M = (R)-1,2-epoxypropane + coenzyme M. The catalysed reaction is (S)-2-hydroxypropyl-coenzyme M = (S)-1,2-epoxypropane + coenzyme M. It functions in the pathway alkene metabolism; propylene degradation. Its activity is regulated as follows. Inhibited by methylepoxypropane. Inhibited by the zinc chelator 4-(2-pyridylazo)resorcinol (PAR), in the presence of p- (hydroxymercuri)benzenesulfonic acid (PMPS), and by EDTA. Not inhibited by the coenzyme M analog 2-bromoethanesulfonate (BES). Its function is as follows. Involved in aliphatic epoxide carboxylation. Catalyzes the addition of coenzyme M (CoM) to either R- or S-epoxypropane to form the thioether conjugate 2-hydroxypropyl-CoM. Catalyzes the reaction of CoM with R-epoxypropane at a rate approximately twice of that with S-epoxypropane. The CoM analogs 2-mercaptopropionate, 2-mercaptoethanol and cysteine substitute poorly for CoM as the thiol substrate. This chain is 2-hydroxypropyl-CoM lyase, found in Xanthobacter autotrophicus (strain ATCC BAA-1158 / Py2).